The primary structure comprises 287 residues: 4,4'-diapophytoene synthase (287 aa).

Residues 18 to 21 (HSKS), tyrosine 41, and arginine 45 each bind (2E,6E)-farnesyl diphosphate. The Mg(2+) site is built by aspartate 48 and aspartate 52. Glutamine 165 provides a ligand contact to (2E,6E)-farnesyl diphosphate. Asparagine 168 serves as a coordination point for Mg(2+). Arginine 171 is a (2E,6E)-farnesyl diphosphate binding site. Residue aspartate 172 participates in Mg(2+) binding. Tyrosine 248 is a binding site for (2E,6E)-farnesyl diphosphate.

This sequence belongs to the phytoene/squalene synthase family. CrtM subfamily. Requires Mg(2+) as cofactor.

It catalyses the reaction 2 (2E,6E)-farnesyl diphosphate = 15-cis-4,4'-diapophytoene + 2 diphosphate. The protein operates within carotenoid biosynthesis; staphyloxanthin biosynthesis; staphyloxanthin from farnesyl diphosphate: step 1/5. Functionally, involved in the biosynthesis of the yellow-orange carotenoid staphyloxanthin, which plays a role in the virulence via its protective function against oxidative stress. Catalyzes the head-to-head condensation of two molecules of farnesyl diphosphate (FPP) into the colorless C(30) carotenoid 4,4'-diapophytoene (dehydrosqualene). The chain is 4,4'-diapophytoene synthase (crtM) from Staphylococcus aureus (strain bovine RF122 / ET3-1).